Reading from the N-terminus, the 244-residue chain is Adenosylcobinamide-GDP ribazoletransferase (244 aa).

Transmembrane regions (helical) follow at residues 31–51 (LLFY…ASHL), 55–75 (APAP…SGAL), 109–129 (IAVV…WVLV), 134–154 (GGWL…LFMG), and 188–208 (VVLG…VFLW).

Belongs to the CobS family. The cofactor is Mg(2+).

The protein resides in the cell inner membrane. It catalyses the reaction alpha-ribazole + adenosylcob(III)inamide-GDP = adenosylcob(III)alamin + GMP + H(+). The catalysed reaction is alpha-ribazole 5'-phosphate + adenosylcob(III)inamide-GDP = adenosylcob(III)alamin 5'-phosphate + GMP + H(+). Its pathway is cofactor biosynthesis; adenosylcobalamin biosynthesis; adenosylcobalamin from cob(II)yrinate a,c-diamide: step 7/7. Its function is as follows. Joins adenosylcobinamide-GDP and alpha-ribazole to generate adenosylcobalamin (Ado-cobalamin). Also synthesizes adenosylcobalamin 5'-phosphate from adenosylcobinamide-GDP and alpha-ribazole 5'-phosphate. The protein is Adenosylcobinamide-GDP ribazoletransferase of Pseudomonas entomophila (strain L48).